Here is a 167-residue protein sequence, read N- to C-terminus: Piercer of microtubule wall 1 protein (167 aa).

Residues 1 to 54 (MSEEKPQQSAEEPEPGEPKAKPAPEEPEPGEPKAKPAPEEPEPGEPKAKPAPEK) form a disordered region. Positions 16–54 (GEPKAKPAPEEPEPGEPKAKPAPEEPEPGEPKAKPAPEK) are enriched in basic and acidic residues.

It belongs to the PIERCE1 family. In terms of assembly, microtubule inner protein component of sperm flagellar doublet microtubules. Interacts with CFAP53, ODAD1 and ODAD3; the interactions link the outer dynein arms docking complex (ODA-DC) to the internal microtubule inner proteins (MIP) in cilium axoneme. Expressed in brain, lung, kidney and testis.

The protein localises to the cytoplasm. It localises to the cytoskeleton. The protein resides in the cilium axoneme. It is found in the flagellum axoneme. Functionally, microtubule inner protein involved in the attachment of outer dynein arms (ODAs) to dynein-decorated doublet microtubules (DMTs) in cilia axoneme. Functions at the initial step of left-right asymmetry specification of the visceral organs. The sequence is that of Piercer of microtubule wall 1 protein from Mus musculus (Mouse).